Here is a 74-residue protein sequence, read N- to C-terminus: Large ribosomal subunit protein bL27c (74 aa).

The protein belongs to the bacterial ribosomal protein bL27 family.

The protein resides in the plastid. The protein localises to the chloroplast. The chain is Large ribosomal subunit protein bL27c (rpl27) from Pleurochrysis haptonemofera (Unicellular marine alga).